A 176-amino-acid chain; its full sequence is MKYNNIIFLGLCLGLTTYSALSADSVIKISGRVLDYGCTVSSDSLNFTVDLQKNSARQFPTTGSTSPAVPFQITLSECSKGTTGVRVAFNGIEDAENNTLLKLDEGSNTASGLGIEILDANMRPVKLNDLHAGMQWIPLVPEQNNILPYSARLKSTQKSVNPGLVRASATFTLEFQ.

An N-terminal signal peptide occupies residues 1-22 (MKYNNIIFLGLCLGLTTYSALS). An intrachain disulfide couples cysteine 38 to cysteine 78.

The protein belongs to the fimbrial protein family.

It is found in the fimbrium. This is an uncharacterized protein from Escherichia coli (strain K12).